Here is a 92-residue protein sequence, read N- to C-terminus: Small ribosomal subunit protein uS19c (92 aa).

Belongs to the universal ribosomal protein uS19 family.

It localises to the plastid. The protein resides in the chloroplast. Its function is as follows. Protein S19 forms a complex with S13 that binds strongly to the 16S ribosomal RNA. In Psilotum nudum (Whisk fern), this protein is Small ribosomal subunit protein uS19c.